Consider the following 185-residue polypeptide: Elongation factor P (185 aa).

It belongs to the elongation factor P family.

The protein resides in the cytoplasm. Its pathway is protein biosynthesis; polypeptide chain elongation. Its function is as follows. Involved in peptide bond synthesis. Stimulates efficient translation and peptide-bond synthesis on native or reconstituted 70S ribosomes in vitro. Probably functions indirectly by altering the affinity of the ribosome for aminoacyl-tRNA, thus increasing their reactivity as acceptors for peptidyl transferase. The protein is Elongation factor P of Bacillus cereus (strain 03BB102).